Consider the following 217-residue polypeptide: MKIALYSILLITVCYLSSTDAYLFDPKAVDALLREIRARLQATGKEPHARKIEQETEEIKKEELMQAEDVEGSGSGEEIEGSGEVISTITGVPIMDNEEKKDLKPENFPRPEPIFDKYGNLKSKDKLEALTYSNFKKQAPATLQDHYNLNPTGTLQMLQGLDIHGGSGGYHRALSGGYLPPSTYDPYNVNWHSYGDEGVKMKDKAISVFRRVIAPGR.

Positions 1-21 (MKIALYSILLITVCYLSSTDA) are cleaved as a signal peptide.

Its subcellular location is the nucleus. It is found in the secreted. Functionally, probably acts downstream of the Wnt signaling pathway. The sequence is that of Protein dao-4 from Caenorhabditis elegans.